The chain runs to 308 residues: Acetylglutamate kinase (308 aa).

Residues 86-87, R108, and N201 each bind substrate; that span reads GG.

It belongs to the acetylglutamate kinase family. ArgB subfamily.

It localises to the cytoplasm. The catalysed reaction is N-acetyl-L-glutamate + ATP = N-acetyl-L-glutamyl 5-phosphate + ADP. It participates in amino-acid biosynthesis; L-arginine biosynthesis; N(2)-acetyl-L-ornithine from L-glutamate: step 2/4. In terms of biological role, catalyzes the ATP-dependent phosphorylation of N-acetyl-L-glutamate. The sequence is that of Acetylglutamate kinase from Prochlorococcus marinus (strain MIT 9313).